We begin with the raw amino-acid sequence, 547 residues long: MAAKDVYFSSDARDKMLRGVNILANAVKVTLGPKGRNVVIEKSFGAPRTTKDGVSVAKEIELADKFENLGAQMIREVASKTNDKAGDGTTTATVLAQAIVQEGLKSVAAGMNPMDLKRGIDKAVAIAIEDIKTSSKKVTTNAEIAQVGTISANGDKEVGEMIAKAMDKVGNEGVITVEEAKTAETELDVVEGMQFDRGYLSPYFITNADKMEVQLEEPLILLFEKKLSSLQPLLPVLEAVVQSGRPLLIIAEDVEGEALATLVVNKLRGGLRVAAVKAPGFGDRRKAMLEDIAILTGAQVVSEDIGIKLENVSLEMLGRAKKVSITKDDTTIVDGVGEKADIEARIAQIKRQIEDTTSDYDKEKLQERLAKLAGGVAVIRVGGSTEVEVKEKKDRVDDALNATRAAADEGIVPGGGTALLKASKALAGVVGDNDDQTAGIAIVRRALQAPIRQIAENAGVEGSIVVGKILENDNSAFGFNAQTEQYVDLVVDGVIDPAKVVRTALQNAASVAGLLITTEAAIVEAPKKGGGAPAGGGMPGGMGDMDF.

ATP-binding positions include 30–33, Lys-51, 87–91, Gly-415, and Asp-496; these read TLGP and DGTTT. The interval 528–547 is disordered; sequence KGGGAPAGGGMPGGMGDMDF.

It belongs to the chaperonin (HSP60) family. Forms a cylinder of 14 subunits composed of two heptameric rings stacked back-to-back. Interacts with the co-chaperonin GroES.

The protein localises to the cytoplasm. It carries out the reaction ATP + H2O + a folded polypeptide = ADP + phosphate + an unfolded polypeptide.. Functionally, together with its co-chaperonin GroES, plays an essential role in assisting protein folding. The GroEL-GroES system forms a nano-cage that allows encapsulation of the non-native substrate proteins and provides a physical environment optimized to promote and accelerate protein folding. The chain is Chaperonin GroEL from Caulobacter vibrioides (strain ATCC 19089 / CIP 103742 / CB 15) (Caulobacter crescentus).